The sequence spans 145 residues: D-aminoacyl-tRNA deacylase (145 aa).

The Gly-cisPro motif, important for rejection of L-amino acids signature appears at 137–138 (GP).

Belongs to the DTD family. Homodimer.

The protein resides in the cytoplasm. The enzyme catalyses glycyl-tRNA(Ala) + H2O = tRNA(Ala) + glycine + H(+). It catalyses the reaction a D-aminoacyl-tRNA + H2O = a tRNA + a D-alpha-amino acid + H(+). In terms of biological role, an aminoacyl-tRNA editing enzyme that deacylates mischarged D-aminoacyl-tRNAs. Also deacylates mischarged glycyl-tRNA(Ala), protecting cells against glycine mischarging by AlaRS. Acts via tRNA-based rather than protein-based catalysis; rejects L-amino acids rather than detecting D-amino acids in the active site. By recycling D-aminoacyl-tRNA to D-amino acids and free tRNA molecules, this enzyme counteracts the toxicity associated with the formation of D-aminoacyl-tRNA entities in vivo and helps enforce protein L-homochirality. The polypeptide is D-aminoacyl-tRNA deacylase (Idiomarina loihiensis (strain ATCC BAA-735 / DSM 15497 / L2-TR)).